Consider the following 331-residue polypeptide: Serine/threonine-protein phosphatase PP1 isozyme 7 (331 aa).

Met-1 is subject to N-acetylmethionine. Residues Asp-60, His-62, Asp-88, and Asn-120 each coordinate Mn(2+). His-121 acts as the Proton donor in catalysis. The Mn(2+) site is built by His-169 and His-244.

This sequence belongs to the PPP phosphatase family. PP-1 subfamily. It depends on Mn(2+) as a cofactor. In terms of tissue distribution, expressed in roots, rosettes and flowers.

It localises to the nucleus. The protein localises to the cytoplasm. The enzyme catalyses O-phospho-L-seryl-[protein] + H2O = L-seryl-[protein] + phosphate. It catalyses the reaction O-phospho-L-threonyl-[protein] + H2O = L-threonyl-[protein] + phosphate. Its activity is regulated as follows. Phosphatase activity is strongly reduced by the protein phosphatase inhibitor 2 (I-2). Its function is as follows. Serine/threonine-protein phosphatase that possesses phosphatase activity toward para-nitrophenyl phosphate (pNPP) in vitro. The polypeptide is Serine/threonine-protein phosphatase PP1 isozyme 7 (Arabidopsis thaliana (Mouse-ear cress)).